The primary structure comprises 115 residues: Large ribosomal subunit protein bL19 (115 aa).

Belongs to the bacterial ribosomal protein bL19 family.

Functionally, this protein is located at the 30S-50S ribosomal subunit interface and may play a role in the structure and function of the aminoacyl-tRNA binding site. This chain is Large ribosomal subunit protein bL19, found in Coxiella burnetii (strain CbuK_Q154) (Coxiella burnetii (strain Q154)).